The sequence spans 364 residues: UDP-arabinopyranose mutase 1 (364 aa).

A DXD motif motif is present at residues 110 to 112 (DDD). Residue Arg158 is glycosylated (N-linked (Glc...) arginine).

This sequence belongs to the RGP family. As to quaternary structure, heteromers with UAM2 and UAM3. Mn(2+) is required as a cofactor. The cofactor is Mg(2+). Reversibly glycosylated in vitro at Arg-158 by UDP-glucose. Reversibly glycosylated by UDP-xylose and UDP-galactose.

It is found in the golgi apparatus. The enzyme catalyses UDP-beta-L-arabinofuranose = UDP-beta-L-arabinopyranose. In terms of biological role, UDP-L-arabinose mutase involved in the biosynthesis of cell wall non-cellulosic polysaccharides. Catalyzes the interconvertion of UDP-L-arabinopyranose (UDP-Arap) and UDP-L-arabinofuranose (UDP-Araf). Preferentially catalyzes the formation of UDP-Arap from UDP-Araf. At thermodynamic equilibrium in vitro the ratio of the pyranose form over the furanose form is 90:10. Is probably active as heteromer in vivo. The polypeptide is UDP-arabinopyranose mutase 1 (Oryza sativa subsp. japonica (Rice)).